We begin with the raw amino-acid sequence, 964 residues long: DNA primase (964 aa).

A disordered region spans residues 807-844; that stretch reads SAPSLPTLVGRGGGGEGGASSDYEEERAVGSDEEEDDD.

This sequence belongs to the herpesviridae DNA primase family. In terms of assembly, associates with the helicase and the primase-associated factor to form the helicase-primase factor.

Its subcellular location is the host nucleus. Functionally, essential component of the helicase/primase complex. Unwinds the DNA at the replication forks and generates single-stranded DNA for both leading and lagging strand synthesis. The primase initiates primer synthesis and thereby produces large amount of short RNA primers on the lagging strand that the polymerase elongates using dNTPs. In Mus musculus (Mouse), this protein is DNA primase (UL70).